The chain runs to 240 residues: Ubiquinone biosynthesis O-methyltransferase (240 aa).

S-adenosyl-L-methionine is bound by residues Arg-44, Gly-64, Asp-85, and Met-129.

Belongs to the methyltransferase superfamily. UbiG/COQ3 family.

The catalysed reaction is a 3-demethylubiquinol + S-adenosyl-L-methionine = a ubiquinol + S-adenosyl-L-homocysteine + H(+). The enzyme catalyses a 3-(all-trans-polyprenyl)benzene-1,2-diol + S-adenosyl-L-methionine = a 2-methoxy-6-(all-trans-polyprenyl)phenol + S-adenosyl-L-homocysteine + H(+). The protein operates within cofactor biosynthesis; ubiquinone biosynthesis. O-methyltransferase that catalyzes the 2 O-methylation steps in the ubiquinone biosynthetic pathway. The protein is Ubiquinone biosynthesis O-methyltransferase of Escherichia coli (strain SMS-3-5 / SECEC).